Consider the following 79-residue polypeptide: Acyl carrier protein (79 aa).

The 76-residue stretch at 2-77 (SEVADKVKKI…DAVEYIEKQK (76 aa)) folds into the Carrier domain. Ser-37 is modified (O-(pantetheine 4'-phosphoryl)serine).

It belongs to the acyl carrier protein (ACP) family. In terms of processing, 4'-phosphopantetheine is transferred from CoA to a specific serine of apo-ACP by AcpS. This modification is essential for activity because fatty acids are bound in thioester linkage to the sulfhydryl of the prosthetic group.

It is found in the cytoplasm. It participates in lipid metabolism; fatty acid biosynthesis. Functionally, carrier of the growing fatty acid chain in fatty acid biosynthesis. This chain is Acyl carrier protein, found in Granulibacter bethesdensis (strain ATCC BAA-1260 / CGDNIH1).